The chain runs to 359 residues: DNA polymerase IV (359 aa).

The UmuC domain maps to 4-185; it reads IIHIDMDCYF…LPLSKIPGVG (182 aa). 2 residues coordinate Mg(2+): aspartate 8 and aspartate 103. Residue glutamate 104 is part of the active site.

It belongs to the DNA polymerase type-Y family. As to quaternary structure, monomer. Mg(2+) is required as a cofactor.

Its subcellular location is the cytoplasm. The enzyme catalyses DNA(n) + a 2'-deoxyribonucleoside 5'-triphosphate = DNA(n+1) + diphosphate. Functionally, poorly processive, error-prone DNA polymerase involved in untargeted mutagenesis. Copies undamaged DNA at stalled replication forks, which arise in vivo from mismatched or misaligned primer ends. These misaligned primers can be extended by PolIV. Exhibits no 3'-5' exonuclease (proofreading) activity. May be involved in translesional synthesis, in conjunction with the beta clamp from PolIII. In Shewanella frigidimarina (strain NCIMB 400), this protein is DNA polymerase IV.